We begin with the raw amino-acid sequence, 55 residues long: Neurotoxin BmP08 (55 aa).

The signal sequence occupies residues 1 to 23 (MKIFFAVLVILVLFSMLIWTAYG). 3 cysteine pairs are disulfide-bonded: cysteine 30–cysteine 45, cysteine 36–cysteine 50, and cysteine 39–cysteine 53.

In terms of tissue distribution, expressed by the venom gland.

The protein resides in the secreted. In Olivierus martensii (Manchurian scorpion), this protein is Neurotoxin BmP08.